The primary structure comprises 202 residues: Protein Thf1 (202 aa).

The stretch at Ile174–Lys202 forms a coiled coil.

The protein belongs to the THF1 family.

May be involved in photosynthetic membrane biogenesis. This is Protein Thf1 from Prochlorococcus marinus subsp. pastoris (strain CCMP1986 / NIES-2087 / MED4).